We begin with the raw amino-acid sequence, 203 residues long: ATP-dependent Clp protease proteolytic subunit (203 aa).

The active-site Nucleophile is the serine 103. Histidine 128 is a catalytic residue.

The protein belongs to the peptidase S14 family. As to quaternary structure, fourteen ClpP subunits assemble into 2 heptameric rings which stack back to back to give a disk-like structure with a central cavity, resembling the structure of eukaryotic proteasomes.

Its subcellular location is the cytoplasm. It catalyses the reaction Hydrolysis of proteins to small peptides in the presence of ATP and magnesium. alpha-casein is the usual test substrate. In the absence of ATP, only oligopeptides shorter than five residues are hydrolyzed (such as succinyl-Leu-Tyr-|-NHMec, and Leu-Tyr-Leu-|-Tyr-Trp, in which cleavage of the -Tyr-|-Leu- and -Tyr-|-Trp bonds also occurs).. In terms of biological role, cleaves peptides in various proteins in a process that requires ATP hydrolysis. Has a chymotrypsin-like activity. Plays a major role in the degradation of misfolded proteins. The sequence is that of ATP-dependent Clp protease proteolytic subunit from Nitrosococcus oceani (strain ATCC 19707 / BCRC 17464 / JCM 30415 / NCIMB 11848 / C-107).